The chain runs to 260 residues: 5'-nucleotidase SurE (260 aa).

4 residues coordinate a divalent metal cation: Asp8, Asp9, Ser39, and Asn96.

This sequence belongs to the SurE nucleotidase family. A divalent metal cation serves as cofactor.

It is found in the cytoplasm. It catalyses the reaction a ribonucleoside 5'-phosphate + H2O = a ribonucleoside + phosphate. Its function is as follows. Nucleotidase that shows phosphatase activity on nucleoside 5'-monophosphates. This Moorella thermoacetica (strain ATCC 39073 / JCM 9320) protein is 5'-nucleotidase SurE.